The sequence spans 155 residues: DNA gyrase inhibitor (155 aa).

This sequence belongs to the DNA gyrase inhibitor family. In terms of assembly, interacts with DNA gyrase.

It localises to the cytoplasm. In terms of biological role, inhibits the supercoiling activity of DNA gyrase. Acts by inhibiting DNA gyrase at an early step, prior to (or at the step of) binding of DNA by the gyrase. It protects cells against toxins that target DNA gyrase, by inhibiting activity of these toxins and reducing the formation of lethal double-strand breaks in the cell. The protein is DNA gyrase inhibitor of Edwardsiella piscicida.